A 305-amino-acid chain; its full sequence is UDP-3-O-acyl-N-acetylglucosamine deacetylase (305 aa).

H79, H238, and D242 together coordinate Zn(2+). Catalysis depends on H265, which acts as the Proton donor.

The protein belongs to the LpxC family. Zn(2+) serves as cofactor.

It carries out the reaction a UDP-3-O-[(3R)-3-hydroxyacyl]-N-acetyl-alpha-D-glucosamine + H2O = a UDP-3-O-[(3R)-3-hydroxyacyl]-alpha-D-glucosamine + acetate. The protein operates within glycolipid biosynthesis; lipid IV(A) biosynthesis; lipid IV(A) from (3R)-3-hydroxytetradecanoyl-[acyl-carrier-protein] and UDP-N-acetyl-alpha-D-glucosamine: step 2/6. Catalyzes the hydrolysis of UDP-3-O-myristoyl-N-acetylglucosamine to form UDP-3-O-myristoylglucosamine and acetate, the committed step in lipid A biosynthesis. The protein is UDP-3-O-acyl-N-acetylglucosamine deacetylase of Citrobacter koseri (strain ATCC BAA-895 / CDC 4225-83 / SGSC4696).